We begin with the raw amino-acid sequence, 304 residues long: Aspartate carbamoyltransferase catalytic subunit (304 aa).

Carbamoyl phosphate is bound by residues R49 and T50. K77 provides a ligand contact to L-aspartate. Residues R99, H127, and Q130 each coordinate carbamoyl phosphate. L-aspartate contacts are provided by R160 and R211. Carbamoyl phosphate-binding residues include A252 and P253.

Belongs to the aspartate/ornithine carbamoyltransferase superfamily. ATCase family. As to quaternary structure, heterododecamer (2C3:3R2) of six catalytic PyrB chains organized as two trimers (C3), and six regulatory PyrI chains organized as three dimers (R2).

The catalysed reaction is carbamoyl phosphate + L-aspartate = N-carbamoyl-L-aspartate + phosphate + H(+). It participates in pyrimidine metabolism; UMP biosynthesis via de novo pathway; (S)-dihydroorotate from bicarbonate: step 2/3. Functionally, catalyzes the condensation of carbamoyl phosphate and aspartate to form carbamoyl aspartate and inorganic phosphate, the committed step in the de novo pyrimidine nucleotide biosynthesis pathway. This chain is Aspartate carbamoyltransferase catalytic subunit, found in Bacillus cytotoxicus (strain DSM 22905 / CIP 110041 / 391-98 / NVH 391-98).